The following is a 398-amino-acid chain: 4-hydroxy-3-methylbut-2-en-1-yl diphosphate synthase (ferredoxin) (398 aa).

Residues cysteine 306, cysteine 309, cysteine 340, and glutamate 347 each coordinate [4Fe-4S] cluster.

This sequence belongs to the IspG family. The cofactor is [4Fe-4S] cluster.

It carries out the reaction (2E)-4-hydroxy-3-methylbut-2-enyl diphosphate + 2 oxidized [2Fe-2S]-[ferredoxin] + H2O = 2-C-methyl-D-erythritol 2,4-cyclic diphosphate + 2 reduced [2Fe-2S]-[ferredoxin] + H(+). The protein operates within isoprenoid biosynthesis; isopentenyl diphosphate biosynthesis via DXP pathway; isopentenyl diphosphate from 1-deoxy-D-xylulose 5-phosphate: step 5/6. Functionally, converts 2C-methyl-D-erythritol 2,4-cyclodiphosphate (ME-2,4cPP) into 1-hydroxy-2-methyl-2-(E)-butenyl 4-diphosphate. The protein is 4-hydroxy-3-methylbut-2-en-1-yl diphosphate synthase (ferredoxin) of Synechococcus sp. (strain CC9311).